The following is a 582-amino-acid chain: Type I secretion system ATP-binding protein PrsD (582 aa).

3 helical membrane passes run 22–42 (FIGV…GSFF), 59–79 (LIAL…FELI), and 148–168 (IAIC…GGLI). One can recognise an ABC transmembrane type-1 domain in the interval 22–301 (FIGVGVASAL…AIGNWRGLVA (280 aa)). In terms of domain architecture, ABC transporter spans 332–568 (LTVEGLASGP…VLRPQQVERQ (237 aa)). 366-373 (GPSASGKS) lines the ATP pocket.

The protein belongs to the ABC transporter superfamily. In terms of assembly, part of a type I secretion system composed of PrsD and PrsE.

The protein localises to the cell inner membrane. Its function is as follows. Mediates secretion of glycanase ExsH. The protein is Type I secretion system ATP-binding protein PrsD (prsD) of Rhizobium meliloti (strain 1021) (Ensifer meliloti).